A 159-amino-acid polypeptide reads, in one-letter code: 6,7-dimethyl-8-ribityllumazine synthase (159 aa).

Residues W26, 57–59 (ALE), and 79–81 (CVI) each bind 5-amino-6-(D-ribitylamino)uracil. 84 to 85 (GT) provides a ligand contact to (2S)-2-hydroxy-3-oxobutyl phosphate. H87 acts as the Proton donor in catalysis. N112 lines the 5-amino-6-(D-ribitylamino)uracil pocket. R126 contributes to the (2S)-2-hydroxy-3-oxobutyl phosphate binding site.

The protein belongs to the DMRL synthase family.

It catalyses the reaction (2S)-2-hydroxy-3-oxobutyl phosphate + 5-amino-6-(D-ribitylamino)uracil = 6,7-dimethyl-8-(1-D-ribityl)lumazine + phosphate + 2 H2O + H(+). The protein operates within cofactor biosynthesis; riboflavin biosynthesis; riboflavin from 2-hydroxy-3-oxobutyl phosphate and 5-amino-6-(D-ribitylamino)uracil: step 1/2. In terms of biological role, catalyzes the formation of 6,7-dimethyl-8-ribityllumazine by condensation of 5-amino-6-(D-ribitylamino)uracil with 3,4-dihydroxy-2-butanone 4-phosphate. This is the penultimate step in the biosynthesis of riboflavin. The polypeptide is 6,7-dimethyl-8-ribityllumazine synthase (Corynebacterium efficiens (strain DSM 44549 / YS-314 / AJ 12310 / JCM 11189 / NBRC 100395)).